A 185-amino-acid chain; its full sequence is Ribosome-recycling factor (185 aa).

Residues 137 to 158 form a disordered region; the sequence is NQVKKLEKDKEISEDESKKAQE. A compositionally biased stretch (basic and acidic residues) spans 140–158; the sequence is KKLEKDKEISEDESKKAQE.

This sequence belongs to the RRF family.

Its subcellular location is the cytoplasm. Functionally, responsible for the release of ribosomes from messenger RNA at the termination of protein biosynthesis. May increase the efficiency of translation by recycling ribosomes from one round of translation to another. In Helicobacter pylori (strain P12), this protein is Ribosome-recycling factor.